We begin with the raw amino-acid sequence, 239 residues long: MVQPQTSKAESPALAASPNAQMDDVIDTLTSLRLTNSALRREASTLRAEKANLTNMLESVMAELTLLRTRARIPGALQITPPISSITSNGTRPMTTPPTSLPEPFSGDPGRLAGFLMQMDRFMIFQASRFPGEAERVAFLVSRLTGEAEKWAIPHMQPDSPLRNNYQGFLAELRRTYKSPLRHARRAQIRKTSASNRAVRERQMLCRQLASAGTGPCPVHPASNGTSPAPALPARARNL.

Positions 29-69 form a coiled coil; it reads LTSLRLTNSALRREASTLRAEKANLTNMLESVMAELTLLRT. Over residues 82-94 the composition is skewed to polar residues; that stretch reads PISSITSNGTRPM. Disordered stretches follow at residues 82 to 106 and 214 to 239; these read PISS…EPFS and TGPC…ARNL. The span at 228–239 shows a compositional bias: low complexity; sequence PAPALPARARNL.

This sequence belongs to the LDOC1 family.

This Homo sapiens (Human) protein is Retrotransposon Gag-like protein 6.